Consider the following 1100-residue polypeptide: Beta-alanine-activating enzyme (1100 aa).

A disordered region spans residues H162 to E181. Residues T197–K205, D427, R441, and K526 contribute to the ATP site. Residues E552–V632 form the Carrier domain. At S591 the chain carries O-(pantetheine 4'-phosphoryl)serine. The interval S643 to S671 is disordered. S651 carries the phosphoserine modification.

The protein belongs to the ATP-dependent AMP-binding enzyme family.

In terms of biological role, covalently binds beta-alanine in an ATP-dependent manner to form a thioester bond with its phosphopantetheine group and transfers it to an as yet unknown acceptor via an amide bond. May be required for a post-translational protein modification or for post-transcriptional modification of an RNA. The protein is Beta-alanine-activating enzyme (Aasdh) of Mus musculus (Mouse).